A 461-amino-acid chain; its full sequence is MVKDSEFLTLVFQSILDEIDVGLHVVDEHGNTIVYNNKMMQIEDMEKHDVLNKNLMDVFMFSKQQDSTLVQALQEGKTIKNVKQSYFNNKGQEITTINHTYPIVQDGKIRGAVEIAKDVTKLERLIRENMNKKGSTTYTFDSILGTSPAIQDVIENAKRATRTSSSVLLAGETGTGKELFAQSIHNGSDRSGGPFISQNCAALPDSLVESILFGTKKGAFTGAVDQPGLFEQAHGGTLLLDEINSLNLSLQAKLLRALQERKIRRIGSTKDTPIDVRIIATMNEDPIDAIAGERMRKDLYYRLSVVTLIIPPLRERKEDILLLASEFIQKNNHLFQMNVEHISDDVKQFFLSYDWPGNIRELEHMIEGAMNFMTDEQTITASHLPYQYRMKIKPADIPEPETPRHQPAADLKEKMESFEKYVIENVLRKHGHNISKAAQELGISRQSLQYRLKKFSHSSNE.

4-aspartylphosphate is present on aspartate 57. Positions 143–372 constitute a Sigma-54 factor interaction domain; it reads ILGTSPAIQD…EHMIEGAMNF (230 aa). Residues 171–178 and 233–242 each bind ATP; these read GETGTGKE and AHGGTLLLDE. Positions 434–453 form a DNA-binding region, H-T-H motif; it reads ISKAAQELGISRQSLQYRLK.

Its function is as follows. Positive regulator of arginine catabolism. Controls the transcription of the two operons rocABC and rocDEF and probably acts by binding to the corresponding upstream activating sequences. This chain is Transcriptional activator RocR (rocR), found in Bacillus subtilis (strain 168).